The sequence spans 243 residues: Sugar fermentation stimulation protein homolog (243 aa).

It belongs to the SfsA family.

The protein is Sugar fermentation stimulation protein homolog of Bdellovibrio bacteriovorus (strain ATCC 15356 / DSM 50701 / NCIMB 9529 / HD100).